Here is a 279-residue protein sequence, read N- to C-terminus: tRNA pseudouridine synthase A (279 aa).

The Nucleophile role is filled by Asp54. Position 112 (Tyr112) interacts with substrate.

Belongs to the tRNA pseudouridine synthase TruA family. As to quaternary structure, homodimer.

It carries out the reaction uridine(38/39/40) in tRNA = pseudouridine(38/39/40) in tRNA. Its function is as follows. Formation of pseudouridine at positions 38, 39 and 40 in the anticodon stem and loop of transfer RNAs. In Cutibacterium acnes (strain DSM 16379 / KPA171202) (Propionibacterium acnes), this protein is tRNA pseudouridine synthase A.